The chain runs to 1332 residues: Aldehyde oxidase 1 (1332 aa).

One can recognise a 2Fe-2S ferredoxin-type domain in the interval 4 to 91 (STLYFYVNGR…GAAVTTVEGV (88 aa)). Cysteine 43, cysteine 48, cysteine 51, and cysteine 73 together coordinate [2Fe-2S] cluster. Glutamine 112 contributes to the Mo-molybdopterin binding site. Residues cysteine 113, cysteine 116, cysteine 148, and cysteine 150 each contribute to the [2Fe-2S] cluster site. Cysteine 150 contributes to the Mo-molybdopterin binding site. The region spanning 234 to 419 (FTGDRVTWIS…LSVTIPYSRK (186 aa)) is the FAD-binding PCMH-type domain. FAD is bound by residues 262–269 (VVMGNTSV), alanine 343, serine 352, histidine 356, aspartate 365, and leucine 409. Mo-molybdopterin is bound by residues 800-801 (AF), methionine 1041, 1082-1085 (GSVV), glutamine 1197, and leucine 1262. Glutamate 1264 functions as the Proton acceptor; for azaheterocycle hydroxylase activity in the catalytic mechanism.

It belongs to the xanthine dehydrogenase family. Homodimer. [2Fe-2S] cluster serves as cofactor. The cofactor is FAD. Requires Mo-molybdopterin as cofactor. Expressed in liver.

The protein resides in the cytoplasm. The enzyme catalyses an aldehyde + O2 + H2O = a carboxylate + H2O2 + H(+). It carries out the reaction retinal + O2 + H2O = retinoate + H2O2 + H(+). Its activity is regulated as follows. Inhibited by menadione and isovanillin. Not inhibited by allopurinol, a xanthine dehydrogenase potent inhibitor. Functionally, oxidase with broad substrate specificity, oxidizing aromatic azaheterocycles, such as N1-methylnicotinamide, N-methylphthalazinium and phthalazine, as well as aldehydes, such as benzaldehyde, retinal, pyridoxal, and vanillin. Plays a key role in the metabolism of xenobiotics and drugs containing aromatic azaheterocyclic substituents. Participates in the bioactivation of prodrugs such as famciclovir, catalyzing the oxidation step from 6-deoxypenciclovir to penciclovir, which is a potent antiviral agent. Is probably involved in the regulation of reactive oxygen species homeostasis. May be a prominent source of superoxide generation via the one-electron reduction of molecular oxygen. May also catalyze nitric oxide (NO) production via the reduction of nitrite to NO with NADH or aldehyde as electron donor. May play a role in adipogenesis. In Cavia porcellus (Guinea pig), this protein is Aldehyde oxidase 1.